The primary structure comprises 602 residues: RecBCD enzyme subunit RecD (602 aa).

171 to 178 (GGPGTGKT) contributes to the ATP binding site.

The protein belongs to the RecD family. In terms of assembly, heterotrimer of RecB, RecC and RecD. All subunits contribute to DNA-binding.

It carries out the reaction Couples ATP hydrolysis with the unwinding of duplex DNA at the replication fork by translocating in the 5'-3' direction. This creates two antiparallel DNA single strands (ssDNA). The leading ssDNA polymer is the template for DNA polymerase III holoenzyme which synthesizes a continuous strand.. The enzyme catalyses ATP + H2O = ADP + phosphate + H(+). Its function is as follows. A helicase/nuclease that prepares dsDNA breaks (DSB) for recombinational DNA repair. Binds to DSBs and unwinds DNA via a highly rapid and processive ATP-dependent bidirectional helicase activity. Unwinds dsDNA until it encounters a Chi (crossover hotspot instigator) sequence from the 3' direction. Cuts ssDNA a few nucleotides 3' to the Chi site. The properties and activities of the enzyme are changed at Chi. The Chi-altered holoenzyme produces a long 3'-ssDNA overhang and facilitates RecA-binding to the ssDNA for homologous DNA recombination and repair. Holoenzyme degrades any linearized DNA that is unable to undergo homologous recombination. In the holoenzyme this subunit has ssDNA-dependent ATPase and 5'-3' helicase activity. When added to pre-assembled RecBC greatly stimulates nuclease activity and augments holoenzyme processivity. Negatively regulates the RecA-loading ability of RecBCD. The sequence is that of RecBCD enzyme subunit RecD from Buchnera aphidicola subsp. Acyrthosiphon pisum (strain APS) (Acyrthosiphon pisum symbiotic bacterium).